The primary structure comprises 97 residues: Large ribosomal subunit protein uL23 (97 aa).

Belongs to the universal ribosomal protein uL23 family. In terms of assembly, part of the 50S ribosomal subunit. Contacts protein L29, and trigger factor when it is bound to the ribosome.

In terms of biological role, one of the early assembly proteins it binds 23S rRNA. One of the proteins that surrounds the polypeptide exit tunnel on the outside of the ribosome. Forms the main docking site for trigger factor binding to the ribosome. This is Large ribosomal subunit protein uL23 from Mesorhizobium japonicum (strain LMG 29417 / CECT 9101 / MAFF 303099) (Mesorhizobium loti (strain MAFF 303099)).